The chain runs to 89 residues: Co-chaperonin GroES (89 aa).

It belongs to the GroES chaperonin family. Heptamer of 7 subunits arranged in a ring. Interacts with the chaperonin GroEL.

The protein localises to the cytoplasm. Functionally, together with the chaperonin GroEL, plays an essential role in assisting protein folding. The GroEL-GroES system forms a nano-cage that allows encapsulation of the non-native substrate proteins and provides a physical environment optimized to promote and accelerate protein folding. GroES binds to the apical surface of the GroEL ring, thereby capping the opening of the GroEL channel. This chain is Co-chaperonin GroES, found in Porphyromonas gingivalis (strain ATCC 33277 / DSM 20709 / CIP 103683 / JCM 12257 / NCTC 11834 / 2561).